The chain runs to 144 residues: 3-hydroxyacyl-[acyl-carrier-protein] dehydratase FabZ (144 aa).

H48 is an active-site residue.

The protein belongs to the thioester dehydratase family. FabZ subfamily.

It localises to the cytoplasm. It catalyses the reaction a (3R)-hydroxyacyl-[ACP] = a (2E)-enoyl-[ACP] + H2O. Functionally, involved in unsaturated fatty acids biosynthesis. Catalyzes the dehydration of short chain beta-hydroxyacyl-ACPs and long chain saturated and unsaturated beta-hydroxyacyl-ACPs. The polypeptide is 3-hydroxyacyl-[acyl-carrier-protein] dehydratase FabZ (Listeria welshimeri serovar 6b (strain ATCC 35897 / DSM 20650 / CCUG 15529 / CIP 8149 / NCTC 11857 / SLCC 5334 / V8)).